A 516-amino-acid chain; its full sequence is MENGQGTGSKLGLPPLTPEQQEALQKAKKYAMEQSIKSVLVKQTIAHQQQQLTNLQMAAVTMGFGDPLSSLQSVAAQRQRALAIMCRVYVGSIYYELGEDTIRQAFAPFGPIKSIDMSWDSVTMKHKGFAFVEYEVPEAAQLALEQMNSVMLGGRNIKVGRPGSIGQAQPIIEQLAEEARAYNRIYVASIHPDLSDDDIKSVFEAFGKIKSCMLAREPTTGKHKGFGFIEYEKPQSSLDAVSSMNLFDLGGQYLRVGKAVTPPMPLLTPTTPGGLPPAAAVAAAAATAKITAQEAVAGTVLSSLASPAHILSQQMGLPQAVLAAQAPGIITGLSTTKTVFHLVGLVNPVLASPPVTAPASMGTPTSAVQLHTEVKREEDSRRTAEDHSAPVGNGQDSELERLSVSASAGRQAAIQSKSTVMVLRNMVGPEDIDDDLEGEVMEECGKYGAVNRVIIYQERQGEEDDAEIIVKIFVEFSDAGEMNKAIQALNNRWFAGRKVVAELYDQDRFNSSDLTA.

2 RRM domains span residues 86–164 and 183–261; these read CRVY…RPGS and NRIY…KAVT. A disordered region spans residues 356–398; that stretch reads TAPASMGTPTSAVQLHTEVKREEDSRRTAEDHSAPVGNGQDSE. The segment covering 372-388 has biased composition (basic and acidic residues); sequence TEVKREEDSRRTAEDHS. In terms of domain architecture, RRM 3; atypical spans 419–506; it reads TVMVLRNMVG…RKVVAELYDQ (88 aa).

Belongs to the RRM half pint family.

It is found in the nucleus. Its function is as follows. DNA- and RNA-binding protein, involved in transcription repression and pre-mRNA splicing. The chain is Poly(U)-binding-splicing factor PUF60-B (puf60b) from Danio rerio (Zebrafish).